We begin with the raw amino-acid sequence, 554 residues long: Hedycaryol synthase (554 aa).

(2E,6E)-farnesyl diphosphate contacts are provided by arginine 270, aspartate 307, aspartate 311, arginine 449, and aspartate 452. Mg(2+) contacts are provided by aspartate 307 and aspartate 311. The short motif at 307 to 311 is the DDXXD motif element; sequence DDTYD. Residues aspartate 452, serine 456, and glutamate 460 each contribute to the Mg(2+) site.

The protein belongs to the terpene synthase family. Mg(2+) serves as cofactor. In terms of tissue distribution, specifically expressed in flowers.

The enzyme catalyses (2E,6E)-farnesyl diphosphate + H2O = (2E,6E)-hedycaryol + diphosphate. It functions in the pathway secondary metabolite biosynthesis; terpenoid biosynthesis. In terms of biological role, sesquiterpene synthase that catalyzes the formation of sesquiterpenes and sesquiterpenoid alcohols. Converts farnesyl diphosphate (FPP) to hedycaryol. Hedycaryol is likely to be one of the terpenes that attract insects for pollination of Camellia brevistyla. The polypeptide is Hedycaryol synthase (Camellia brevistyla).